Consider the following 375-residue polypeptide: MLLPPHPGRTLPAYHGDNRFLLGACFLSKLPMLRPMKLSLVCSANPNNHRSRSSDITRHQKGGSARRKSKPYQEKDDSENIDEFDTDIMSSKNGPPISLTSNSRPQATSVPGEREKEIVELFKRVQAQLRARGKGKEEKKPEQAKAQGERGSVDSLLNLLRKHSVDQRRKSGDEKEQSVDQTKRSNESGNKQNSSIFIKNDTQEEQKKPHPAAFKRPASNFRRRSPVPNVKFQPVTNVDAERVINNINDAVQEAKPTLENKAATDEPDSVSTFEPNSVIEPENLSLDDLDHISDDEPDASDTDEPSGEYDEPSLQIPSVPIIDESHDTTLKSSLGGPDLSTLKVTELRELAKSRGIKGYSKMKKNDLVELLSNMA.

Disordered regions lie at residues 46–113 (PNNH…VPGE), 130–233 (RARG…VKFQ), and 257–315 (TLEN…PSLQ). A compositionally biased stretch (basic residues) spans 59 to 70 (HQKGGSARRKSK). The segment covering 76–86 (DDSENIDEFDT) has biased composition (acidic residues). A compositionally biased stretch (polar residues) spans 88-109 (IMSSKNGPPISLTSNSRPQATS). 2 stretches are compositionally biased toward basic and acidic residues: residues 134-152 (KGKEEKKPEQAKAQGERGS) and 163-186 (HSVDQRRKSGDEKEQSVDQTKRSN). Over residues 187-197 (ESGNKQNSSIF) the composition is skewed to polar residues. Over residues 295 to 311 (DEPDASDTDEPSGEYDE) the composition is skewed to acidic residues. The tract at residues 338 to 375 (DLSTLKVTELRELAKSRGIKGYSKMKKNDLVELLSNMA) is interaction with WAXY.

As to quaternary structure, binds to the DNA in the promoter region of WAXY containing the sequence 5'-ACGCACGCTAACGTGA-3'. As to expression, expressed in tissues with high cell division activities: in root tips, stem node, panicle, flower and immature seed. Weakly expressed in root and leaf.

Its function is as follows. May regulate cell proliferation and plant growth. The polypeptide is SAP-like protein BP-73 (BP-73) (Oryza sativa subsp. japonica (Rice)).